The following is a 318-amino-acid chain: tRNA dimethylallyltransferase (318 aa).

Residue 28 to 35 (GPTGAGKS) coordinates ATP. Residue 30-35 (TGAGKS) coordinates substrate. The segment at 53–56 (DSMQ) is interaction with substrate tRNA.

The protein belongs to the IPP transferase family. In terms of assembly, monomer. It depends on Mg(2+) as a cofactor.

It carries out the reaction adenosine(37) in tRNA + dimethylallyl diphosphate = N(6)-dimethylallyladenosine(37) in tRNA + diphosphate. Functionally, catalyzes the transfer of a dimethylallyl group onto the adenine at position 37 in tRNAs that read codons beginning with uridine, leading to the formation of N6-(dimethylallyl)adenosine (i(6)A). The sequence is that of tRNA dimethylallyltransferase from Parafrankia sp. (strain EAN1pec).